Here is a 543-residue protein sequence, read N- to C-terminus: Germacrene A synthase (543 aa).

Residues D296, D300, D439, and E447 each contribute to the Mg(2+) site. The short motif at 296–300 (DDTYD) is the DDXXD motif element.

The protein belongs to the terpene synthase family. Tpsa subfamily. The cofactor is Mg(2+). Mn(2+) serves as cofactor. In terms of tissue distribution, barely detectable in leaves.

The protein resides in the plastid. The protein localises to the chloroplast. The enzyme catalyses (2E,6E)-farnesyl diphosphate = germacrene A + diphosphate. It carries out the reaction (2E,6E)-farnesyl diphosphate = (1S,2S,4R)-beta-elemene + diphosphate. The protein operates within secondary metabolite biosynthesis; terpenoid biosynthesis. Functionally, sesquiterpene synthase involved in the biosynthesis of volatile compounds widely used in aromatherapy and folk medicine, and present in culinary herbs. Mediates the conversion of (2E,6E)-farnesyl diphosphate (FPP) into germacrene A and beta-elemene. Not able to use (2E)-geranyl diphosphate (GPP) as substrate. This chain is Germacrene A synthase, found in Lavandula viridis (Green lavender).